Here is a 256-residue protein sequence, read N- to C-terminus: tRNA (guanine-N(1)-)-methyltransferase (256 aa).

S-adenosyl-L-methionine-binding positions include Gly-119 and 139 to 144 (IGDYVV).

Belongs to the RNA methyltransferase TrmD family. Homodimer.

The protein resides in the cytoplasm. It catalyses the reaction guanosine(37) in tRNA + S-adenosyl-L-methionine = N(1)-methylguanosine(37) in tRNA + S-adenosyl-L-homocysteine + H(+). Specifically methylates guanosine-37 in various tRNAs. This is tRNA (guanine-N(1)-)-methyltransferase from Nitrosospira multiformis (strain ATCC 25196 / NCIMB 11849 / C 71).